Reading from the N-terminus, the 133-residue chain is Secreted effector protein SteB (133 aa).

The protein localises to the secreted. The protein resides in the host cytoplasm. Effector proteins function to alter host cell physiology and promote bacterial survival in host tissues. This is Secreted effector protein SteB (steB) from Salmonella typhimurium (strain 14028s / SGSC 2262).